Here is a 391-residue protein sequence, read N- to C-terminus: Transposase for insertion sequence element IS905 (391 aa).

Belongs to the transposase mutator family.

Functionally, required for the transposition of the insertion element. In Lactococcus lactis subsp. lactis (strain IL1403) (Streptococcus lactis), this protein is Transposase for insertion sequence element IS905 (tra905).